Reading from the N-terminus, the 382-residue chain is Alkanesulfonate monooxygenase (382 aa).

The protein belongs to the SsuD family. As to quaternary structure, homotetramer.

The enzyme catalyses an alkanesulfonate + FMNH2 + O2 = an aldehyde + FMN + sulfite + H2O + 2 H(+). Functionally, catalyzes the desulfonation of aliphatic sulfonates. This is Alkanesulfonate monooxygenase from Yersinia pestis bv. Antiqua (strain Antiqua).